Reading from the N-terminus, the 159-residue chain is Large ribosomal subunit protein uL15 (159 aa).

The span at 21–34 shows a compositional bias: basic residues; that stretch reads LRPAPGAHKSKIRV. Positions 21-55 are disordered; sequence LRPAPGAHKSKIRVGRGEGSKGKTAGRGTKGSKAR.

Belongs to the universal ribosomal protein uL15 family. As to quaternary structure, part of the 50S ribosomal subunit.

Functionally, binds to the 23S rRNA. The sequence is that of Large ribosomal subunit protein uL15 from Frankia casuarinae (strain DSM 45818 / CECT 9043 / HFP020203 / CcI3).